We begin with the raw amino-acid sequence, 100 residues long: Integration host factor subunit alpha (100 aa).

This sequence belongs to the bacterial histone-like protein family. Heterodimer of an alpha and a beta chain.

This protein is one of the two subunits of integration host factor, a specific DNA-binding protein that functions in genetic recombination as well as in transcriptional and translational control. This is Integration host factor subunit alpha from Cereibacter sphaeroides (strain ATCC 17023 / DSM 158 / JCM 6121 / CCUG 31486 / LMG 2827 / NBRC 12203 / NCIMB 8253 / ATH 2.4.1.) (Rhodobacter sphaeroides).